The sequence spans 232 residues: E3 ubiquitin-protein ligase RNF125 (232 aa).

A compositionally biased stretch (polar residues) spans 1 to 10 (MGSVLSTDSG). Positions 1–23 (MGSVLSTDSGKSAPASATARALE) are disordered. Glycine 2 is lipidated: N-myristoyl glycine. Cysteine 37 and cysteine 40 together coordinate Zn(2+). The RING-type zinc finger occupies 37 to 76 (CAVCLEVLHQPVRTRCGHVFCRSCIATSLKNNKWTCPYCR). The tract at residues 43 to 45 (VLH) is interaction with the C2HC RNF-type zinc finger. Residues cysteine 52, histidine 54, cysteine 57, cysteine 60, cysteine 72, cysteine 75, cysteine 100, and cysteine 103 each contribute to the Zn(2+) site. A C2HC RNF-type zinc finger spans residues 100–119 (CAECDTLVCLSEMRAHIRTC). The interaction with the RING-type zinc finger stretch occupies residues 109 to 113 (LSEMR). Residues histidine 115 and cysteine 119 each coordinate Zn(2+). Positions 120 to 128 (QKYIDKYGP) are linker region. The interval 210–224 (EEALIRRVLDRSLLE) is required for interaction with ubiquitin and for autoubiquitination.

As to quaternary structure, interacts with UBE2D1. Interacts with VCP/p97; leading to recruit RNF125 to RIGI and promote ubiquitination of RIGI. Autoubiquitinated, leading to its subsequent proteasomal degradation. In terms of tissue distribution, predominantly expressed in lymphoid tissues, including bone marrow, spleen and thymus. Also weakly expressed in other tissues. Predominant in the CD4(+) and CD8(+) T-cells, suggesting that it is preferentially confined to T-cells.

The protein localises to the golgi apparatus membrane. The catalysed reaction is S-ubiquitinyl-[E2 ubiquitin-conjugating enzyme]-L-cysteine + [acceptor protein]-L-lysine = [E2 ubiquitin-conjugating enzyme]-L-cysteine + N(6)-ubiquitinyl-[acceptor protein]-L-lysine.. It functions in the pathway protein modification; protein ubiquitination. In terms of biological role, E3 ubiquitin-protein ligase that mediates ubiquitination and subsequent proteasomal degradation of target proteins, such as RIGI, MAVS/IPS1, IFIH1/MDA5, JAK1 and p53/TP53. Acts as a negative regulator of type I interferon production by mediating ubiquitination of RIGI at 'Lys-181', leading to RIGI degradation. Mediates ubiquitination and subsequent degradation of p53/TP53. Mediates ubiquitination and subsequent degradation of JAK1. Acts as a positive regulator of T-cell activation. This chain is E3 ubiquitin-protein ligase RNF125, found in Homo sapiens (Human).